The following is a 447-amino-acid chain: Drebrin-like protein A (447 aa).

The ADF-H domain occupies 2 to 133 (SVNLSKNGAA…EPESIMEKVA (132 aa)). 2 disordered regions span residues 141–160 (NFHK…VGSV) and 184–368 (KDEE…TENQ). Residues 180–245 (AKAEKDEEER…EQEETEKQQT (66 aa)) are a coiled coil. Positions 184–242 (KDEEERRMEENRRANSEKDRLERERKEREQREAETREQRFRERAKEIDAQRKEQEETEK) are enriched in basic and acidic residues. Polar residues predominate over residues 246–255 (VPASQRSVNP). Residues 319–328 (PESPVPPVSH) are compositionally biased toward pro residues. The segment covering 345 to 365 (QEEENIYQDATEDQNIYEDTT) has biased composition (acidic residues). The region spanning 388–447 (EKGVCARALYDYQAADDTEISFDPDDLITQIQFIDEGWWRGFSPAGHFGMFPANYVELLE) is the SH3 domain.

It belongs to the ABP1 family.

It is found in the cytoplasm. It localises to the cytoskeleton. The protein resides in the cell projection. The protein localises to the lamellipodium. Its subcellular location is the ruffle. It is found in the cell cortex. It localises to the cytosol. The protein resides in the synapse. The protein localises to the perikaryon. Its subcellular location is the neuron projection. It is found in the cell membrane. It localises to the cytoplasmic vesicle. The protein resides in the clathrin-coated vesicle membrane. The protein localises to the golgi apparatus membrane. Its subcellular location is the podosome. It is found in the early endosome. It localises to the dendrite. The protein resides in the postsynaptic density. Its function is as follows. Adapter protein that binds F-actin and dynamin, and thereby plays a role in receptor-mediated endocytosis. Plays a role in the reorganization of the actin cytoskeleton, formation of cell projections, such as neurites, in neuron morphogenesis and synapse formation. Does not bind G-actin and promote actin polymerization by itself, but excerts its functions by interaction with other proteins. Required for the formation of organized podosome rosettes. The chain is Drebrin-like protein A (dbnl-a) from Xenopus laevis (African clawed frog).